We begin with the raw amino-acid sequence, 258 residues long: UBX domain-containing protein 2A (258 aa).

Basic and acidic residues predominate over residues 1 to 14 (MKEVDNLDSIKEEW). Residues 1 to 30 (MKEVDNLDSIKEEWACETGPPDSQPLNDNQ) are disordered. The tract at residues 1 to 152 (MKEVDNLDSI…SATPRIVSKA (152 aa)) is required for interaction with CHRNA3. Positions 1 to 165 (MKEVDNLDSI…EVDNKSTLSA (165 aa)) are required for inhibition of CHRNA3 ubiquitination and translocation of CHRNA3 to the plasma membrane resulting in an increase in acetylcholine-gated nicotinic acetylcholine receptor currents. The region spanning 61–125 (QVDVNIKLWK…VEDKKNEVCM (65 aa)) is the SEP domain. The interval 168 to 258 (LNNLEPITRI…QKTAEPFRKL (91 aa)) is required for interaction with VCP. The region spanning 170-247 (NLEPITRIQI…DLKNAVIIQR (78 aa)) is the UBX domain.

In terms of assembly, part of a complex composed of STUB1/CHIP, VCP/p97, CHRNA3, and UBXN2A that modulates the ubiquitination and endoplasmic reticulum-associated degradation (ERAD) of CHRNA3. Within the complex UBXN2A acts as a scaffold protein required for the interaction of CHRNA3 with VCP/p97, this interaction also inhibits CHRNA3 ubiquitination by STUB1/CHIP and subsequently ERAD. Interacts (via SEP domain) with CHRNA3 and interacts (via UBX domain) with VCP/P97; these interactions are required for the interaction of CHRNA3 with the STUB1-VCP-UBXN2A complex. Interacts with HSPA9/MOT-2 (via SBD domain); the interaction inhibits HSPA9/MOT-2 interaction with and degradation of p53, thereby promotes p53 translocation to the nucleus. Interacts with RICTOR. Ubiquitinated. In terms of tissue distribution, expressed in the prefrontal cortex (at protein level). Expressed in the habenula and hippocampus (at protein level). Expressed in peripheral ganglia.

It localises to the golgi apparatus. The protein localises to the endoplasmic reticulum. Its subcellular location is the perikaryon. It is found in the cell projection. The protein resides in the dendrite. It localises to the nucleus. The protein localises to the cytoplasm. Functionally, acts to repress the ubiquitination and subsequent endoplasmic reticulum-associated degradation of CHRNA3 by the STUB1-VCP-UBXN2A complex in cortical neurons. Also acts to promote the translocation of CHRNA3 to the plasma membrane and subsequently increases plasma membrane acetylcholine-gated ion-channel activation. Plays a role in the inhibition of STUB1-mediated TP53 degradation, via its interaction with HSPA9 which acts to inhibit TP53 binding to HSPA9. Positively mediates the ubiquitination and proteosomal degradation of RICTOR, may thereby act as a negative regulator of the mTORC2 pathway. This chain is UBX domain-containing protein 2A, found in Mus musculus (Mouse).